The chain runs to 1203 residues: DNA-directed RNA polymerase subunit beta' (1203 aa).

Residues Cys60, Cys62, Cys75, and Cys78 each contribute to the Zn(2+) site. Mg(2+) is bound by residues Asp449, Asp451, and Asp453. The Zn(2+) site is built by Cys818, Cys892, Cys899, and Cys902.

The protein belongs to the RNA polymerase beta' chain family. As to quaternary structure, the RNAP catalytic core consists of 2 alpha, 1 beta, 1 beta' and 1 omega subunit. When a sigma factor is associated with the core the holoenzyme is formed, which can initiate transcription. Mg(2+) is required as a cofactor. It depends on Zn(2+) as a cofactor.

The catalysed reaction is RNA(n) + a ribonucleoside 5'-triphosphate = RNA(n+1) + diphosphate. Functionally, DNA-dependent RNA polymerase catalyzes the transcription of DNA into RNA using the four ribonucleoside triphosphates as substrates. The sequence is that of DNA-directed RNA polymerase subunit beta' from Bacillus thuringiensis (strain Al Hakam).